The primary structure comprises 237 residues: Dihydroceramide fatty acyl 2-hydroxylase FAH1 (237 aa).

A run of 2 helical transmembrane segments spans residues 50-70 (LTLT…VWCI) and 80-100 (LPEI…FEYV). Zn(2+)-binding residues include His102, His107, His123, His126, and His127. Transmembrane regions (helical) follow at residues 137–157 (VFPP…AKAI) and 164–184 (PALF…HYYL). The Zn(2+) site is built by His181, His185, His201, His204, and His205.

This sequence belongs to the sterol desaturase family. As to quaternary structure, interacts with CYTB5-A, CYTB5-B, CYTB5-C and CYTB5-D. Interacts indirectly with BI-1 via CYTB5-D. Zn(2+) is required as a cofactor. In terms of tissue distribution, expressed in leaves, roots, flowers and seeds.

It localises to the endoplasmic reticulum membrane. It catalyses the reaction an N-(1,2-saturated acyl)sphinganine + 2 Fe(II)-[cytochrome b5] + O2 + 2 H(+) = an N-[(2'R)-hydroxyacyl]sphinganine + 2 Fe(III)-[cytochrome b5] + H2O. Its function is as follows. Fatty acid 2-hydroxylase involved in the alpha-hydroxylation of sphingolipid-associated very long-chain fatty acids (VLCFA). Probably involved in the resistance response to oxidative stress. The protein is Dihydroceramide fatty acyl 2-hydroxylase FAH1 of Arabidopsis thaliana (Mouse-ear cress).